A 140-amino-acid polypeptide reads, in one-letter code: Small ribosomal subunit protein bS6 (140 aa).

Residues 111-140 are disordered; the sequence is EHFTGPAGAEGSDDESTESTDEAVAETADA. The span at 121-140 shows a compositional bias: acidic residues; it reads GSDDESTESTDEAVAETADA.

It belongs to the bacterial ribosomal protein bS6 family.

Its function is as follows. Binds together with bS18 to 16S ribosomal RNA. The polypeptide is Small ribosomal subunit protein bS6 (Rhodopirellula baltica (strain DSM 10527 / NCIMB 13988 / SH1)).